The sequence spans 360 residues: NAD(P)H-quinone oxidoreductase subunit 1, chloroplastic (360 aa).

8 helical membrane-spanning segments follow: residues 27-47 (IWIF…VLVI), 98-118 (FSIG…VIPF), 129-149 (IGIF…LMSG), 165-185 (AAQS…ISLL), 203-223 (FWGW…ISSL), 253-273 (FGLF…FVTV), 297-317 (IFGT…FLFV), and 340-360 (FLLP…LFSL).

It belongs to the complex I subunit 1 family. In terms of assembly, NDH is composed of at least 16 different subunits, 5 of which are encoded in the nucleus.

It localises to the plastid. Its subcellular location is the chloroplast thylakoid membrane. The enzyme catalyses a plastoquinone + NADH + (n+1) H(+)(in) = a plastoquinol + NAD(+) + n H(+)(out). It carries out the reaction a plastoquinone + NADPH + (n+1) H(+)(in) = a plastoquinol + NADP(+) + n H(+)(out). Functionally, NDH shuttles electrons from NAD(P)H:plastoquinone, via FMN and iron-sulfur (Fe-S) centers, to quinones in the photosynthetic chain and possibly in a chloroplast respiratory chain. The immediate electron acceptor for the enzyme in this species is believed to be plastoquinone. Couples the redox reaction to proton translocation, and thus conserves the redox energy in a proton gradient. This Arabidopsis thaliana (Mouse-ear cress) protein is NAD(P)H-quinone oxidoreductase subunit 1, chloroplastic.